The chain runs to 166 residues: 6,7-dimethyl-8-ribityllumazine synthase (166 aa).

Residues F22, 56–58, and 80–82 each bind 5-amino-6-(D-ribitylamino)uracil; these read SME and AVI. Residue 85-86 coordinates (2S)-2-hydroxy-3-oxobutyl phosphate; it reads ET. The Proton donor role is filled by H88. F113 is a 5-amino-6-(D-ribitylamino)uracil binding site. R127 serves as a coordination point for (2S)-2-hydroxy-3-oxobutyl phosphate.

Belongs to the DMRL synthase family.

It carries out the reaction (2S)-2-hydroxy-3-oxobutyl phosphate + 5-amino-6-(D-ribitylamino)uracil = 6,7-dimethyl-8-(1-D-ribityl)lumazine + phosphate + 2 H2O + H(+). Its pathway is cofactor biosynthesis; riboflavin biosynthesis; riboflavin from 2-hydroxy-3-oxobutyl phosphate and 5-amino-6-(D-ribitylamino)uracil: step 1/2. Catalyzes the formation of 6,7-dimethyl-8-ribityllumazine by condensation of 5-amino-6-(D-ribitylamino)uracil with 3,4-dihydroxy-2-butanone 4-phosphate. This is the penultimate step in the biosynthesis of riboflavin. This Thermotoga neapolitana (strain ATCC 49049 / DSM 4359 / NBRC 107923 / NS-E) protein is 6,7-dimethyl-8-ribityllumazine synthase.